We begin with the raw amino-acid sequence, 348 residues long: Rhodopsin (348 aa).

Met-1 is subject to N-acetylmethionine. At 1–36 (MNGTEGPNFYVPFSNKTGVVRSPFEFPQYYLAEPWQ) the chain is on the extracellular side. Residues Asn-2 and Asn-15 are each glycosylated (N-linked (GlcNAc...) asparagine). The helical transmembrane segment at 37 to 61 (FSMLAAYMFLLIVLGFPINFLTLYV) threads the bilayer. Residues 62-73 (TVQHKKLRTPLN) are Cytoplasmic-facing. Residues 74–96 (YILLNLAVADLFMVFGGFTTTLY) form a helical membrane-spanning segment. The Extracellular portion of the chain corresponds to 97–110 (TSLHGYFVFGPTGC). The cysteines at positions 110 and 187 are disulfide-linked. The chain crosses the membrane as a helical span at residues 111-133 (NLEGFFATLGGEIALWSLVVLAI). Residues 134–136 (ERY) carry the 'Ionic lock' involved in activated form stabilization motif. At 134-152 (ERYVVVCKPMSNFRFGENH) the chain is on the cytoplasmic side. The chain crosses the membrane as a helical span at residues 153–173 (AIMGVGFTWVMALACAAPPLV). Over 174–202 (GWSRYIPEGMQCSCGIDYYTLKPEVNNES) the chain is Extracellular. Glu-201 serves as a coordination point for Zn(2+). The chain crosses the membrane as a helical span at residues 203–224 (FVIYMFVVHFTIPMIVIFFCYG). Residues 225–252 (QLVFTVKEAAAQQQESATTQKAEKEVTR) are Cytoplasmic-facing. The chain crosses the membrane as a helical span at residues 253–274 (MVIIMVIAFLICWVPYASVAFY). At 275-286 (IFTHQGSNFGPI) the chain is on the extracellular side. Gln-279 is a binding site for Zn(2+). A helical transmembrane segment spans residues 287-308 (FMTLPAFFAKAASIYNPVIYIM). Lys-296 bears the N6-(retinylidene)lysine mark. Residues 309 to 348 (MNKQFRTCMITTLCCGKNPLGDDEVSASASKTETSQVAPA) are Cytoplasmic-facing. S-palmitoyl cysteine attachment occurs at residues Cys-322 and Cys-323. The tract at residues 330-348 (DDEVSASASKTETSQVAPA) is interaction with SAG. Residues Ser-334 and Ser-338 each carry the phosphoserine modification. Phosphothreonine is present on residues Thr-340 and Thr-342. Residue Ser-343 is modified to Phosphoserine.

The protein belongs to the G-protein coupled receptor 1 family. Opsin subfamily. As to quaternary structure, homodimer. May form a complex composed of RHO, GRK1 and RCVRN in a Ca(2+)-dependent manner; RCVRN prevents the interaction between GRK1 and RHO. Interacts with GRK1. Interacts (phosphorylated form) with SAG. Interacts with GNAT1. Interacts with GNAT3. SAG and G-proteins compete for a common binding site. Interacts with PRCD; the interaction promotes PRCD stability. Forms a complex with ASAP1 and ARF4. Forms a complex with ASAP1, RAB11A, Rabin8/RAB3IP, ARF4 and RAB11FIP3; the complex regulates Golgi-to-cilia rhodopsin/RHO transport in photoreceptors. Post-translationally, phosphorylated on some or all of the serine and threonine residues present in the C-terminal region. In terms of processing, contains one covalently linked retinal chromophore. Upon light absorption, the covalently bound 11-cis-retinal is converted to all-trans-retinal. After hydrolysis of the Schiff base and release of the covalently bound all-trans-retinal, active rhodopsin is regenerated by binding of a fresh molecule of 11-cis-retinal.

The protein localises to the membrane. Its subcellular location is the cell projection. The protein resides in the cilium. It is found in the photoreceptor outer segment. In terms of biological role, photoreceptor required for image-forming vision at low light intensity. Required for photoreceptor cell viability after birth. Light-induced isomerization of 11-cis to all-trans retinal triggers a conformational change that activates signaling via G-proteins. Subsequent receptor phosphorylation mediates displacement of the bound G-protein alpha subunit by the arrestin SAG and terminates signaling. The polypeptide is Rhodopsin (RHO) (Phoca vitulina (Harbor seal)).